The following is a 264-amino-acid chain: Small ribosomal subunit protein eS4 (264 aa).

Residues leucine 42–aspartate 104 enclose the S4 RNA-binding domain.

Belongs to the eukaryotic ribosomal protein eS4 family.

The protein resides in the cytoplasm. This chain is Small ribosomal subunit protein eS4 (RPS4), found in Solanum tuberosum (Potato).